The following is a 241-amino-acid chain: Phycocyanobilin:ferredoxin oxidoreductase (241 aa).

The protein belongs to the HY2 family.

The enzyme catalyses (2R,3Z)-phycocyanobilin + 4 oxidized [2Fe-2S]-[ferredoxin] = biliverdin IXalpha + 4 reduced [2Fe-2S]-[ferredoxin] + 4 H(+). Functionally, catalyzes the four-electron reduction of biliverdin IX-alpha (2-electron reduction at both the A and D rings); the reaction proceeds via an isolatable 2-electron intermediate, 181,182-dihydrobiliverdin. The sequence is that of Phycocyanobilin:ferredoxin oxidoreductase from Prochlorococcus marinus (strain MIT 9312).